We begin with the raw amino-acid sequence, 493 residues long: 3-octaprenyl-4-hydroxybenzoate carboxy-lyase (493 aa).

Asparagine 172 lines the Mn(2+) pocket. Prenylated FMN contacts are provided by residues 175 to 177 (IYR), 189 to 191 (RWL), and 194 to 195 (RG). Residue glutamate 238 coordinates Mn(2+). Aspartate 287 functions as the Proton donor in the catalytic mechanism.

The protein belongs to the UbiD family. Homohexamer. Prenylated FMN serves as cofactor. The cofactor is Mn(2+).

It localises to the cell membrane. It catalyses the reaction a 4-hydroxy-3-(all-trans-polyprenyl)benzoate + H(+) = a 2-(all-trans-polyprenyl)phenol + CO2. Its pathway is cofactor biosynthesis; ubiquinone biosynthesis. In terms of biological role, catalyzes the decarboxylation of 3-octaprenyl-4-hydroxy benzoate to 2-octaprenylphenol, an intermediate step in ubiquinone biosynthesis. In Shewanella sp. (strain ANA-3), this protein is 3-octaprenyl-4-hydroxybenzoate carboxy-lyase.